The primary structure comprises 362 residues: Alkanal monooxygenase alpha chain (362 aa).

The protein belongs to the bacterial luciferase oxidoreductase family. As to quaternary structure, heterodimer of an alpha and a beta chain.

The enzyme catalyses a long-chain fatty aldehyde + FMNH2 + O2 = a long-chain fatty acid + hnu + FMN + H2O + 2 H(+). Light-emitting reaction in luminous bacteria. This Photorhabdus luminescens (Xenorhabdus luminescens) protein is Alkanal monooxygenase alpha chain (luxA).